The sequence spans 324 residues: Annexin A10 (324 aa).

Annexin repeat units follow at residues 17-88, 89-160, 171-243, and 247-318; these read FNPI…GLMY, PPPL…NLVQ, AMAA…AIVL, and DKPA…AICA.

This sequence belongs to the annexin family.

The polypeptide is Annexin A10 (ANXA10) (Homo sapiens (Human)).